Here is a 795-residue protein sequence, read N- to C-terminus: Serine/threonine-protein kinase MARK1 (795 aa).

A disordered region spans residues 1–41; the sequence is MSARTPLPTVNERDTENHTSVDGYTETHIPPAKSSSRQNLP. At T5 the chain carries Phosphothreonine. The Protein kinase domain maps to 60 to 311; the sequence is YRLQKTIGKG…LEQIMKDRWM (252 aa). ATP contacts are provided by residues 66 to 74 and K89; that span reads IGKGNFAKV. Catalysis depends on D182, which acts as the Proton acceptor. T208 is modified (phosphothreonine). At T215 the chain carries Phosphothreonine; by LKB1 and TAOK1. S219 carries the phosphoserine; by GSK3-beta modification. One can recognise a UBA domain in the interval 329-370; the sequence is DLSDAKRIDIMVTMGFARDEINDALVSQKYDEVMATYILLGR. Disordered stretches follow at residues 377-498 and 518-699; these read GGES…SGGS and QNGR…KPRS. Phosphoserine is present on residues S382, S390, S393, S403, S423, and S444. Residues 387 to 403 are compositionally biased toward polar residues; the sequence is CQRSRPSSDLNNSTLQS. Positions 447–459 are enriched in basic and acidic residues; sequence SEQKEEWGKDTAR. Residues 462 to 473 are compositionally biased toward polar residues; that stretch reads GSTTVGSKSEVT. S475 carries the phosphoserine modification. Residues 486-495 show a composition bias toward polar residues; sequence TASPSNNVYS. Composition is skewed to low complexity over residues 523–547 and 585–599; these read SSLTEMSASSMSSAGSTVASAGPSA and PAASPSAHSISASTP. S588 carries the phosphoserine modification. The residue at position 613 (T613) is a Phosphothreonine; by PKC/PRKCZ. Over residues 647-657 the composition is skewed to polar residues; it reads GTSTGIISKIT. Basic and acidic residues-rich tracts occupy residues 661-676 and 683-697; these read VRRDPSEGEASGRADT and DPKERDKDEGKEAKP. Residue S666 is modified to Phosphoserine. In terms of domain architecture, KA1 spans 746–795; it reads DARQDSLVQWEMEVCKLPRLSLNGVRFKRISGTSIAFKNIASKIANELKL.

This sequence belongs to the protein kinase superfamily. CAMK Ser/Thr protein kinase family. SNF1 subfamily. As to quaternary structure, interacts with MAPT/TAU. Requires Mg(2+) as cofactor. Phosphorylated at Thr-215 by STK11/LKB1 in complex with STE20-related adapter-alpha (STRADA) pseudo kinase and CAB39. Phosphorylation at Thr-215 by TAOK1 activates the kinase activity, leading to phosphorylation and detachment of MAPT/TAU from microtubules. Phosphorylation at Ser-219 by GSK3-beta (GSK3B) inhibits the kinase activity. Phosphorylation at Thr-613 by PRKCZ/aPKC in polarized epithelial cells inhibits the kinase activity.

It is found in the cell membrane. Its subcellular location is the cytoplasm. The protein resides in the cytoskeleton. The protein localises to the cell projection. It localises to the dendrite. It carries out the reaction L-seryl-[protein] + ATP = O-phospho-L-seryl-[protein] + ADP + H(+). It catalyses the reaction L-threonyl-[protein] + ATP = O-phospho-L-threonyl-[protein] + ADP + H(+). The enzyme catalyses L-seryl-[tau protein] + ATP = O-phospho-L-seryl-[tau protein] + ADP + H(+). The catalysed reaction is L-threonyl-[tau protein] + ATP = O-phospho-L-threonyl-[tau protein] + ADP + H(+). With respect to regulation, inhibited by phosphorylation at Ser-219. Activated by phosphorylation on Thr-215. In terms of biological role, serine/threonine-protein kinase. Involved in cell polarity and microtubule dynamics regulation. Phosphorylates DCX, MAP2 and MAP4. Phosphorylates the microtubule-associated protein MAPT/TAU. Involved in cell polarity by phosphorylating the microtubule-associated proteins MAP2, MAP4 and MAPT/TAU at KXGS motifs, causing detachment from microtubules, and their disassembly. Involved in the regulation of neuronal migration through its dual activities in regulating cellular polarity and microtubule dynamics, possibly by phosphorylating and regulating DCX. Also acts as a positive regulator of the Wnt signaling pathway, probably by mediating phosphorylation of dishevelled proteins (DVL1, DVL2 and/or DVL3). This Mus musculus (Mouse) protein is Serine/threonine-protein kinase MARK1.